The sequence spans 470 residues: Dynein axonemal assembly factor 11 (470 aa).

LRR repeat units follow at residues I20 to C43, R44 to L65, K66 to S89, and L90 to Q110. Positions Y128–D146 constitute an LRRCT domain. The stretch at L177 to K288 forms a coiled coil. The disordered stretch occupies residues A182–E265. Positions K194–Y213 are enriched in basic and acidic residues. The CS domain maps to V303–K395. Residues H447–V470 are disordered.

This sequence belongs to the tilB family.

The protein localises to the cytoplasm. The protein resides in the cell projection. It localises to the cilium. It is found in the dynein axonemal particle. Its subcellular location is the flagellum. Involved in dynein arm assembly, is important for expression and transporting outer dynein arm (ODA) proteins from the cytoplasm to the cilia. This is Dynein axonemal assembly factor 11 (dnaaf11) from Xenopus tropicalis (Western clawed frog).